Here is a 465-residue protein sequence, read N- to C-terminus: Glucose-1-phosphate adenylyltransferase (465 aa).

Residues glycine 164, 181-182 (EK), and serine 199 contribute to the alpha-D-glucose 1-phosphate site.

The protein belongs to the bacterial/plant glucose-1-phosphate adenylyltransferase family. As to quaternary structure, homotetramer.

It catalyses the reaction alpha-D-glucose 1-phosphate + ATP + H(+) = ADP-alpha-D-glucose + diphosphate. It functions in the pathway glycan biosynthesis; glycogen biosynthesis. Involved in the biosynthesis of ADP-glucose, a building block required for the elongation reactions to produce glycogen. Catalyzes the reaction between ATP and alpha-D-glucose 1-phosphate (G1P) to produce pyrophosphate and ADP-Glc. In Arthrobacter sp. (strain FB24), this protein is Glucose-1-phosphate adenylyltransferase.